Here is a 409-residue protein sequence, read N- to C-terminus: Elongation factor Tu (409 aa).

The region spanning 10–214 is the tr-type G domain; that stretch reads KPHVNIGTIG…AVDSYIPTPE (205 aa). A G1 region spans residues 19-26; the sequence is GHVDHGKT. 19–26 contributes to the GTP binding site; the sequence is GHVDHGKT. Residue threonine 26 coordinates Mg(2+). A G2 region spans residues 60 to 64; sequence GITIN. A G3 region spans residues 81–84; sequence DCPG. GTP-binding positions include 81–85 and 136–139; these read DCPGH and NKVD. The segment at 136–139 is G4; sequence NKVD. A G5 region spans residues 174–176; sequence SGL.

The protein belongs to the TRAFAC class translation factor GTPase superfamily. Classic translation factor GTPase family. EF-Tu/EF-1A subfamily. Monomer.

The protein localises to the cytoplasm. The catalysed reaction is GTP + H2O = GDP + phosphate + H(+). In terms of biological role, GTP hydrolase that promotes the GTP-dependent binding of aminoacyl-tRNA to the A-site of ribosomes during protein biosynthesis. This Cyanothece sp. (strain PCC 7425 / ATCC 29141) protein is Elongation factor Tu.